A 151-amino-acid polypeptide reads, in one-letter code: Small heat shock protein HspD (151 aa).

The sHSP domain maps to Arg28–Ala138.

It belongs to the small heat shock protein (HSP20) family.

This chain is Small heat shock protein HspD (hspD), found in Bradyrhizobium diazoefficiens (strain JCM 10833 / BCRC 13528 / IAM 13628 / NBRC 14792 / USDA 110).